Reading from the N-terminus, the 457-residue chain is Flavohemoprotein-1 (457 aa).

Positions 2–157 constitute a Globin domain; that stretch reads ALSEDTIKAV…LADLLIKREE (156 aa). H106 serves as a coordination point for heme b. Active-site charge relay system residues include Y116 and E156. The tract at residues 168-456 is reductase; the sequence is GGWRQTRTFR…FEMFGPFKAS (289 aa). Residues 171–278 enclose the FAD-binding FR-type domain; sequence RQTRTFRVEE…APPYGDFFLR (108 aa). FAD contacts are provided by residues Y210 and 227–230; that span reads RQYS. Position 320 to 325 (320 to 325) interacts with NADP(+); sequence GIGQTP. 449 to 452 contributes to the FAD binding site; sequence MFGP.

The protein belongs to the globin family. Two-domain flavohemoproteins subfamily. It in the C-terminal section; belongs to the flavoprotein pyridine nucleotide cytochrome reductase family. In terms of assembly, monomer. The cofactor is heme b. FAD serves as cofactor.

The catalysed reaction is 2 nitric oxide + NADPH + 2 O2 = 2 nitrate + NADP(+) + H(+). It carries out the reaction 2 nitric oxide + NADH + 2 O2 = 2 nitrate + NAD(+) + H(+). Flavohemoprotein involved in nitric oxide (NO) detoxification in an aerobic process, termed nitric oxide dioxygenase (NOD) reaction that utilizes O(2) and NAD(P)H to convert NO to nitrate, which protects the protozoan parasite from various noxious nitrogen compounds. Therefore, plays a central role in the inducible response to nitrosative stress. May also be involved in O(2) detoxification. The polypeptide is Flavohemoprotein-1 (hmpA-1) (Giardia intestinalis (strain P15) (Giardia lamblia)).